A 929-amino-acid chain; its full sequence is Chitin synthase 1 (929 aa).

A compositionally biased stretch (gly residues) spans 1 to 12; it reads MAYRGAGGPGGG. Disordered stretches follow at residues 1 to 43 and 114 to 156; these read MAYR…QEDE and MGGH…GGGL. 2 stretches are compositionally biased toward polar residues: residues 21–33 and 140–149; these read QDLNPHSQYSNVQ and SWVQRQNPNA. Asn-560 carries an N-linked (GlcNAc...) asparagine glycan. Helical transmembrane passes span 587-607, 643-663, 678-698, 730-750, and 758-778; these read FFFHVQLIYNILNVIFTWFSL, LFNAVLKYIYLAFVILQFILA, SFFVFSVIQAYILVLSGYLVV, VILLALIAIYGIYFIASFMYL, and SFPYYMLLMSTYINILMVYAF. N-linked (GlcNAc...) asparagine glycosylation occurs at Asn-801. The next 2 membrane-spanning stretches (helical) occupy residues 857-877 and 897-917; these read TMLVVLWLFSNCLLAVAITSD and FLLFSTAFLSLIRFIGFLWFL.

Belongs to the chitin synthase family. Class III subfamily.

Its subcellular location is the cell membrane. It catalyses the reaction [(1-&gt;4)-N-acetyl-beta-D-glucosaminyl](n) + UDP-N-acetyl-alpha-D-glucosamine = [(1-&gt;4)-N-acetyl-beta-D-glucosaminyl](n+1) + UDP + H(+). In terms of biological role, polymerizes chitin, a structural polymer of the cell wall and septum, by transferring the sugar moiety of UDP-GlcNAc to the non-reducing end of the growing chitin polymer. CHS1 and CHS3 have compensatory functions in cell wall modifications in responses to stresses. Involved in appressoria formation and required for full virulence. In Pyricularia oryzae (strain 70-15 / ATCC MYA-4617 / FGSC 8958) (Rice blast fungus), this protein is Chitin synthase 1.